A 738-amino-acid polypeptide reads, in one-letter code: Integrin beta-2-like protein (738 aa).

Positions Met1–Ser22 are cleaved as a signal peptide. The Extracellular segment spans residues Gln23–Thr671. The region spanning Leu24–Thr74 is the PSI domain. Disulfide bonds link Cys25–Cys419, Cys33–Cys43, Cys36–Cys73, Cys46–Cys62, Cys218–Cys258, Cys358–Cys372, Cys421–Cys439, Cys431–Cys442, Cys444–Cys453, Cys455–Cys486, Cys469–Cys484, Cys478–Cys489, Cys491–Cys506, Cys508–Cys531, Cys513–Cys529, Cys521–Cys534, Cys536–Cys545, Cys547–Cys570, Cys554–Cys568, Cys562–Cys573, Cys575–Cys584, Cys594–Cys603, and Cys600–Cys664. Residue Asn29 is glycosylated (N-linked (GlcNAc...) asparagine). N-linked (GlcNAc...) asparagine glycans are attached at residues Asn50, Asn102, Asn173, Asn226, Asn252, Asn342, Asn360, and Asn386. Residues Ser126–Arg329 form the VWFA domain. 4 consecutive I-EGF domains span residues Cys421–Glu454, Cys455–Glu507, Cys508–Gln546, and Cys547–Glu585. An N-linked (GlcNAc...) asparagine glycan is attached at Asn473. N-linked (GlcNAc...) asparagine glycans are attached at residues Asn627 and Asn669. Residues Ile672–Met692 form a helical membrane-spanning segment. The Cytoplasmic segment spans residues Val693–Gln738. The tract at residues Gly709 to Gln738 is disordered. The segment covering Ala710–His719 has biased composition (polar residues).

It belongs to the integrin beta chain family. Monomer and homodimer. Unlike integrin beta chains, no alpha chain partner has yet been found. Post-translationally, N-glycosylated. Expressed predominantly in maturing and mature neutrophils.

Its subcellular location is the cell membrane. Its function is as follows. During inflammatory stimulation, plays a role in retaining Cxcl13-expressing cells at the site of the inflammatory response. The protein is Integrin beta-2-like protein of Mus musculus (Mouse).